The sequence spans 88 residues: Small ribosomal subunit protein bS16c (88 aa).

The protein belongs to the bacterial ribosomal protein bS16 family.

Its subcellular location is the plastid. The protein resides in the chloroplast. The polypeptide is Small ribosomal subunit protein bS16c (Atropa belladonna (Belladonna)).